Reading from the N-terminus, the 181-residue chain is Early upstream open reading frame (181 aa).

This sequence belongs to the EUO family.

This Chlamydia caviae (strain ATCC VR-813 / DSM 19441 / 03DC25 / GPIC) (Chlamydophila caviae) protein is Early upstream open reading frame.